The sequence spans 732 residues: Cullin-3B (732 aa).

The 63-residue stretch at 662–724 (DRKPQIEAAI…RDFLERDNTD (63 aa)) folds into the Cullin neddylation domain. A Glycyl lysine isopeptide (Lys-Gly) (interchain with G-Cter in NEDD8) cross-link involves residue K676.

The protein belongs to the cullin family. Interacts with BTB/POZ-MATH proteins BPM1 and BPM3. Post-translationally, neddylated. Deneddylated via its interaction with the COP9 signalosome (CSN) complex.

The protein operates within protein modification; protein ubiquitination. Functionally, component of the cullin-RING ubiquitin ligases (CRL), or CUL3-RBX1-BTB protein E3 ligase complexes which mediate the ubiquitination and subsequent proteasomal degradation of target proteins. The functional specificity of the CRL complex depends on the BTB domain-containing protein as the substrate recognition component. Involved in embryo pattern formation and endosperm development. Required for the normal division and organization of the root stem cells and columella root cap cells. Regulates primary root growth by an unknown pathway, but in an ethylene-dependent manner. Functions in distal root patterning, by an ethylene-independent mechanism. Functionally redundant with CUL3A. This chain is Cullin-3B (CUL3B), found in Arabidopsis thaliana (Mouse-ear cress).